We begin with the raw amino-acid sequence, 426 residues long: Mannose-6-phosphate isomerase (426 aa).

Residues Q112, H114, E139, and H277 each contribute to the Zn(2+) site. The active site involves R296.

Belongs to the mannose-6-phosphate isomerase type 1 family. It depends on Zn(2+) as a cofactor.

It is found in the cytoplasm. It catalyses the reaction D-mannose 6-phosphate = D-fructose 6-phosphate. The protein operates within nucleotide-sugar biosynthesis; GDP-alpha-D-mannose biosynthesis; alpha-D-mannose 1-phosphate from D-fructose 6-phosphate: step 1/2. Involved in the synthesis of the GDP-mannose and dolichol-phosphate-mannose required for a number of critical mannosyl transfer reactions. In Ogataea parapolymorpha (strain ATCC 26012 / BCRC 20466 / JCM 22074 / NRRL Y-7560 / DL-1) (Yeast), this protein is Mannose-6-phosphate isomerase (PMI40).